The sequence spans 430 residues: MANVAVVGSQWGDEGKGKIVDWLSERADVVVRFQGGHNAGHTLVIDGVTYKLSLLPSGIVRKGKLSILGNGVVLDPWAFAKEVDEIASKGVAVTPDNLKIAENAVLILPVHRELDEMREGANSGVKIGTTKRGIGPAYEDKAGRRAIRVIDLADPSTLTIKVEGLLAHHNALRRGNRLEELEAGPIVEALKEIAPRVLPFVAPVWNVLDEAKRKGQRILFEGAQGTMLDVDHGTYPFVTSSNTVAGQAAGGSGVGPGAIGFVLGITKAYTTRVGEGPFPTELTDEVGQRLGERGHEFGTVTGRKRRCGWFDAVMVRQAIKTGGITGIALTKLDVLDGFDEIKVCTSYEIDGKLVDHLPAGMDAQAKVTPIYETLEGWKDSTQGARSWAQLPAAAVKYVRYVEELIEAPVALLSTSPERDDTILMKDPFED.

GTP is bound by residues 12 to 18 and 40 to 42; these read GDEGKGK and GHT. Asp-13 (proton acceptor) is an active-site residue. Mg(2+)-binding residues include Asp-13 and Gly-40. Residues 13–16, 38–41, Thr-130, Arg-144, Gln-224, Thr-239, and Arg-303 each bind IMP; these read DEGK and NAGH. Catalysis depends on His-41, which acts as the Proton donor. A substrate-binding site is contributed by 299–305; the sequence is TVTGRKR. Residues Arg-305, 331 to 333, and 413 to 415 contribute to the GTP site; these read KLD and STS.

This sequence belongs to the adenylosuccinate synthetase family. As to quaternary structure, homodimer. Requires Mg(2+) as cofactor.

It localises to the cytoplasm. It catalyses the reaction IMP + L-aspartate + GTP = N(6)-(1,2-dicarboxyethyl)-AMP + GDP + phosphate + 2 H(+). The protein operates within purine metabolism; AMP biosynthesis via de novo pathway; AMP from IMP: step 1/2. Its function is as follows. Plays an important role in the de novo pathway of purine nucleotide biosynthesis. Catalyzes the first committed step in the biosynthesis of AMP from IMP. This is Adenylosuccinate synthetase from Parvibaculum lavamentivorans (strain DS-1 / DSM 13023 / NCIMB 13966).